The following is a 520-amino-acid chain: Glucose-1-phosphate adenylyltransferase small subunit, chloroplastic (520 aa).

The N-terminal 71 residues, 1–71 (MATMAAIGSL…RTPSIVSPKA (71 aa)), are a transit peptide targeting the chloroplast. A disordered region spans residues 1–81 (MATMAAIGSL…VSDSQNSQTC (81 aa)). The span at 14-27 (SSSSNHTRRLSSSS) shows a compositional bias: low complexity. Over residues 28-51 (QRKTLSFSSSSLTGEKLNPTQEII) the composition is skewed to polar residues.

It belongs to the bacterial/plant glucose-1-phosphate adenylyltransferase family. Heterotetramer. In terms of tissue distribution, leaves.

It localises to the plastid. The protein resides in the chloroplast. It carries out the reaction alpha-D-glucose 1-phosphate + ATP + H(+) = ADP-alpha-D-glucose + diphosphate. The protein operates within glycan biosynthesis; starch biosynthesis. Activated by 3'phosphoglycerate, inhibited by orthophosphate. Allosteric regulation. In terms of biological role, this protein plays a role in synthesis of starch. It catalyzes the synthesis of the activated glycosyl donor, ADP-glucose from Glc-1-P and ATP. In Brassica napus (Rape), this protein is Glucose-1-phosphate adenylyltransferase small subunit, chloroplastic (AGPS1).